The chain runs to 240 residues: Uridylate kinase (240 aa).

Residue 13 to 16 coordinates ATP; sequence KLSG. Residues 21–26 are involved in allosteric activation by GTP; the sequence is GDKGFG. Glycine 55 serves as a coordination point for UMP. ATP is bound by residues glycine 56 and arginine 60. UMP contacts are provided by residues aspartate 75 and 136–143; that span reads IGNPYFST. ATP is bound by residues asparagine 164, tyrosine 170, and aspartate 173.

The protein belongs to the UMP kinase family. As to quaternary structure, homohexamer.

The protein resides in the cytoplasm. The enzyme catalyses UMP + ATP = UDP + ADP. The protein operates within pyrimidine metabolism; CTP biosynthesis via de novo pathway; UDP from UMP (UMPK route): step 1/1. Its activity is regulated as follows. Allosterically activated by GTP. Inhibited by UTP. In terms of biological role, catalyzes the reversible phosphorylation of UMP to UDP. The polypeptide is Uridylate kinase (Staphylococcus epidermidis (strain ATCC 35984 / DSM 28319 / BCRC 17069 / CCUG 31568 / BM 3577 / RP62A)).